Consider the following 372-residue polypeptide: Glutamate 5-kinase (372 aa).

Lys-14 is an ATP binding site. 3 residues coordinate substrate: Ser-54, Asp-141, and Asn-153. Thr-173 to Asp-174 provides a ligand contact to ATP. A PUA domain is found at Arg-280 to Met-358.

It belongs to the glutamate 5-kinase family.

It localises to the cytoplasm. It catalyses the reaction L-glutamate + ATP = L-glutamyl 5-phosphate + ADP. It functions in the pathway amino-acid biosynthesis; L-proline biosynthesis; L-glutamate 5-semialdehyde from L-glutamate: step 1/2. Functionally, catalyzes the transfer of a phosphate group to glutamate to form L-glutamate 5-phosphate. The chain is Glutamate 5-kinase from Pseudomonas syringae pv. syringae (strain B728a).